An 822-amino-acid polypeptide reads, in one-letter code: Epidermal growth factor receptor kinase substrate 8 (822 aa).

Composition is skewed to polar residues over residues 1–10 (MNGHISNHPS) and 17–30 (SQMN…TFSQ). The segment at 1–39 (MNGHISNHPSSFGMYPSQMNGYGSSPTFSQTDREHGSKT) is disordered. A Phosphoserine modification is found at Ser-58. One can recognise a PTB domain in the interval 64–194 (QYRVEHLTTF…SDSKGGKQKR (131 aa)). 2 disordered regions span residues 202-225 (ISNA…GTVT) and 298-320 (SKRK…TLRA). Pro residues predominate over residues 208-221 (SIPPPPRAPAPAPP). A Phosphothreonine modification is found at Thr-223. Residues 299 to 309 (KRKKNKKGKRK) are compositionally biased toward basic residues. Thr-317 carries the phosphothreonine modification. The residue at position 476 (Ser-476) is a Phosphoserine. Positions 531–590 (QPKKYAKSKYDFVARNNSELSVLKDDILEILDDRKQWWKVRNASGDSGFVPNNILDIVRP) constitute an SH3 domain. Positions 612 to 689 (EYGPRPADTP…VDRRKSQMEE (78 aa)) are disordered. Residues 618 to 645 (ADTPPAPSPPPTPAPVPVPLPPSTPAPV) are compositionally biased toward pro residues. Ser-625 carries the phosphoserine modification. Thr-629 carries the post-translational modification Phosphothreonine; by MAPK. Positions 649-822 (KVPANITRQN…VESFDEGSSH (174 aa)) are effector region. 3 positions are modified to phosphoserine: Ser-659, Ser-662, and Ser-685. A compositionally biased stretch (basic and acidic residues) spans 671 to 687 (DSQRHKQLPVDRRKSQM). The interval 680 to 698 (VDRRKSQMEEVQDELIHRL) is amphipathic helix. Helix bundle regions lie at residues 718–738 (VINI…QSKG), 752–757 (GAQLFS), 762–767 (ELRTVC), and 766–785 (VCPE…AALE). The disordered stretch occupies residues 787-822 (SSGSSELQEIMRRRQEKISAAASDSGVESFDEGSSH). Ser-811 and Ser-815 each carry phosphoserine.

Belongs to the EPS8 family. As to quaternary structure, homodimer. Part of a complex consisting of ABI1, EPS8 and SOS1. Interacts with MYO15A and WHRN. Interacts with LANCL1. Interacts with EGFR; mediates EPS8 phosphorylation. Interacts with BAIAP2. Interacts with SHB. Post-translationally, ubiquitinated by the SCF(FBXW5) E3 ubiquitin-protein ligase complex during G2 phase, leading to its transient degradation and subsequent cell shape changes required to allow mitotic progression. Reappears at the midzone of dividing cells. Phosphorylation at Ser-625 and Thr-629 by MAPK following BDNF treatment promotes removal from actin and filopodia formation. Phosphorylated by several receptor tyrosine kinases. As to expression, expressed in all tissues analyzed, including heart, brain, placenta, lung, liver, skeletal muscle, kidney and pancreas. Expressed in all epithelial and fibroblastic lines examined and in some, but not all, hematopoietic cells.

The protein localises to the cytoplasm. Its subcellular location is the cell cortex. It localises to the cell projection. It is found in the ruffle membrane. The protein resides in the growth cone. The protein localises to the stereocilium. Its subcellular location is the synapse. It localises to the synaptosome. Functionally, signaling adapter that controls various cellular protrusions by regulating actin cytoskeleton dynamics and architecture. Depending on its association with other signal transducers, can regulate different processes. Together with SOS1 and ABI1, forms a trimeric complex that participates in transduction of signals from Ras to Rac by activating the Rac-specific guanine nucleotide exchange factor (GEF) activity. Acts as a direct regulator of actin dynamics by binding actin filaments and has both barbed-end actin filament capping and actin bundling activities depending on the context. Displays barbed-end actin capping activity when associated with ABI1, thereby regulating actin-based motility process: capping activity is auto-inhibited and inhibition is relieved upon ABI1 interaction. Also shows actin bundling activity when associated with BAIAP2, enhancing BAIAP2-dependent membrane extensions and promoting filopodial protrusions. Involved in the regulation of processes such as axonal filopodia growth, stereocilia length, dendritic cell migration and cancer cell migration and invasion. Acts as a regulator of axonal filopodia formation in neurons: in the absence of neurotrophic factors, negatively regulates axonal filopodia formation via actin-capping activity. In contrast, it is phosphorylated in the presence of BDNF leading to inhibition of its actin-capping activity and stimulation of filopodia formation. Component of a complex with WHRN and MYO15A that localizes at stereocilia tips and is required for elongation of the stereocilia actin core. Indirectly involved in cell cycle progression; its degradation following ubiquitination being required during G2 phase to promote cell shape changes. The protein is Epidermal growth factor receptor kinase substrate 8 (EPS8) of Homo sapiens (Human).